A 426-amino-acid polypeptide reads, in one-letter code: D-tagatose-1,6-bisphosphate aldolase subunit KbaZ (426 aa).

Belongs to the GatZ/KbaZ family. KbaZ subfamily. As to quaternary structure, forms a complex with KbaY.

It functions in the pathway carbohydrate metabolism; D-tagatose 6-phosphate degradation; D-glyceraldehyde 3-phosphate and glycerone phosphate from D-tagatose 6-phosphate: step 2/2. Component of the tagatose-1,6-bisphosphate aldolase KbaYZ that is required for full activity and stability of the Y subunit. Could have a chaperone-like function for the proper and stable folding of KbaY. When expressed alone, KbaZ does not show any aldolase activity. In Escherichia coli O127:H6 (strain E2348/69 / EPEC), this protein is D-tagatose-1,6-bisphosphate aldolase subunit KbaZ.